Consider the following 238-residue polypeptide: Probable xyloglucan-specific endo-beta-1,4-glucanase A (238 aa).

The N-terminal stretch at 1–18 is a signal peptide; sequence MKLSLSVALSLAASTAQA. N-linked (GlcNAc...) asparagine glycans are attached at residues Asn-106 and Asn-171.

The protein belongs to the glycosyl hydrolase 12 (cellulase H) family.

The protein resides in the secreted. The enzyme catalyses xyloglucan + H2O = xyloglucan oligosaccharides.. Its function is as follows. Catalyzes endohydrolysis of 1,4-beta-D-glucosidic linkages in xyloglucan with retention of the beta-configuration of the glycosyl residues. Specific for xyloglucan and does not hydrolyze other cell wall components. This Aspergillus fumigatus (strain ATCC MYA-4609 / CBS 101355 / FGSC A1100 / Af293) (Neosartorya fumigata) protein is Probable xyloglucan-specific endo-beta-1,4-glucanase A (xgeA).